We begin with the raw amino-acid sequence, 307 residues long: Ornithine carbamoyltransferase (307 aa).

Carbamoyl phosphate is bound by residues 53–56 (STRT), Gln80, Arg104, and 131–134 (HPCQ). L-ornithine is bound by residues Asn162, Asp220, and 224–225 (SM). Carbamoyl phosphate contacts are provided by residues 260–261 (CL) and Arg288.

The protein belongs to the aspartate/ornithine carbamoyltransferase superfamily. OTCase family.

The protein localises to the cytoplasm. The catalysed reaction is carbamoyl phosphate + L-ornithine = L-citrulline + phosphate + H(+). The protein operates within amino-acid biosynthesis; L-arginine biosynthesis; L-arginine from L-ornithine and carbamoyl phosphate: step 1/3. Functionally, reversibly catalyzes the transfer of the carbamoyl group from carbamoyl phosphate (CP) to the N(epsilon) atom of ornithine (ORN) to produce L-citrulline. The sequence is that of Ornithine carbamoyltransferase from Nitrosomonas eutropha (strain DSM 101675 / C91 / Nm57).